Consider the following 105-residue polypeptide: Large ribosomal subunit protein eL30 (105 aa).

This sequence belongs to the eukaryotic ribosomal protein eL30 family.

In Methanococcus vannielii (strain ATCC 35089 / DSM 1224 / JCM 13029 / OCM 148 / SB), this protein is Large ribosomal subunit protein eL30 (rpl30e).